The chain runs to 145 residues: Probable thioredoxin-2 (145 aa).

Positions 39 to 144 constitute a Thioredoxin domain; it reads VFDIDSVEDF…LDDFIEDVLA (106 aa). Active-site nucleophile residues include C68 and C71. A disulfide bridge connects residues C68 and C71.

This sequence belongs to the thioredoxin family.

Participates in various redox reactions through the reversible oxidation of its active center dithiol to a disulfide and catalyzes dithiol-disulfide exchange reactions. The sequence is that of Probable thioredoxin-2 (trx-2) from Caenorhabditis elegans.